A 308-amino-acid polypeptide reads, in one-letter code: GTP-binding protein RAD (308 aa).

A compositionally biased stretch (gly residues) spans 1–16 (MTLNGGGSGAGGSRGG). Residues 1-88 (MTLNGGGSGA…SLSSGGSDSD (88 aa)) are disordered. Position 24 is an omega-N-methylarginine (Arg-24). Position 26 is a phosphoserine (Ser-26). A compositionally biased stretch (low complexity) spans 48–68 (QAALTPGALTAAAAGTGTQGP). GTP-binding positions include 98-105 (GAPGVGKS) and 203-206 (NKSD). The segment at 278–297 (AKRFLGRIVARNSRKMAFRA) is calmodulin-binding.

This sequence belongs to the small GTPase superfamily. RGK family. As to quaternary structure, interacts with calmodulin preferentially in the inactive, GDP-bound form. Binds CAMKII which is capable of phosphorylating RAD in vitro. Interacts with CAMK2D. Interacts with CACNB2; interaction may be involved in beta-adrenergic regulation of heart rate and contractile force. Interaction with CACNB2 regulates the trafficking of CACNA1C to the cell membrane. Most abundantly expressed in the heart. Also found in the skeletal muscle and lung. Lesser amounts in placenta and kidney. Also detected in adipose tissue. Overexpressed in muscle of type II diabetic humans.

It is found in the cell membrane. Its function is as follows. May regulate basal voltage-dependent L-type Ca(2+) currents and be required for beta-adrenergic augmentation of Ca(2+) influx in cardiomyocytes, thereby regulating increases in heart rate and contractile force. May play an important role in cardiac antiarrhythmia via the strong suppression of voltage-gated L-type Ca(2+) currents. Regulates voltage-dependent L-type calcium channel subunit alpha-1C trafficking to the cell membrane. Inhibits cardiac hypertrophy through the calmodulin-dependent kinase II (CaMKII) pathway. Inhibits phosphorylation and activation of CAMK2D. The sequence is that of GTP-binding protein RAD (RRAD) from Homo sapiens (Human).